Here is a 441-residue protein sequence, read N- to C-terminus: Serine/threonine-protein phosphatase 2A activator 1 (441 aa).

2 stretches are compositionally biased toward polar residues: residues 66 to 75 and 421 to 432; these read NIPPSNTTHS and QRQDDLNSTTYR. Disordered regions lie at residues 66 to 100 and 421 to 441; these read NIPP…SSNQ and QRQD…LGRN.

This sequence belongs to the PTPA-type PPIase family.

The protein resides in the cytoplasm. Its subcellular location is the nucleus. The enzyme catalyses [protein]-peptidylproline (omega=180) = [protein]-peptidylproline (omega=0). Functionally, PPIases accelerate the folding of proteins. It catalyzes the cis-trans isomerization of proline imidic peptide bonds in oligopeptides. Acts as a regulatory subunit for PP2A-like phosphatases modulating their activity or substrate specificity, probably by inducing a conformational change in the catalytic subunit, a direct target of the PPIase. Can reactivate inactive phosphatase PP2A-phosphatase methylesterase complexes (PP2Ai) in presence of ATP and Mg(2+) by dissociating the inactive form from the complex. This Debaryomyces hansenii (strain ATCC 36239 / CBS 767 / BCRC 21394 / JCM 1990 / NBRC 0083 / IGC 2968) (Yeast) protein is Serine/threonine-protein phosphatase 2A activator 1 (RRD1).